A 315-amino-acid chain; its full sequence is Outer membrane protease OmpP (315 aa).

The signal sequence occupies residues 1 to 23; the sequence is MQTKLLAIMLAAPVVFSSQEASA. Residues D103, D105, D230, and H232 contribute to the active site.

This sequence belongs to the peptidase A26 family.

The protein localises to the cell outer membrane. In terms of biological role, protease; also acts as a receptor for bacteriophage Ox2. This chain is Outer membrane protease OmpP (ompP), found in Escherichia coli (strain K12).